A 449-amino-acid polypeptide reads, in one-letter code: ATP-dependent protease ATPase subunit HslU (449 aa).

ATP-binding positions include isoleucine 18, 60–65 (GVGKTE), aspartate 261, glutamate 327, and arginine 399.

The protein belongs to the ClpX chaperone family. HslU subfamily. In terms of assembly, a double ring-shaped homohexamer of HslV is capped on each side by a ring-shaped HslU homohexamer. The assembly of the HslU/HslV complex is dependent on binding of ATP.

The protein localises to the cytoplasm. ATPase subunit of a proteasome-like degradation complex; this subunit has chaperone activity. The binding of ATP and its subsequent hydrolysis by HslU are essential for unfolding of protein substrates subsequently hydrolyzed by HslV. HslU recognizes the N-terminal part of its protein substrates and unfolds these before they are guided to HslV for hydrolysis. This is ATP-dependent protease ATPase subunit HslU from Oleidesulfovibrio alaskensis (strain ATCC BAA-1058 / DSM 17464 / G20) (Desulfovibrio alaskensis).